The chain runs to 409 residues: Multidrug resistance protein MdtG (409 aa).

Helical transmembrane passes span 16-36 (LIVA…VMPF), 58-78 (IVFS…GGLA), 92-112 (LGMG…QFLI), 115-135 (ALLG…ATQV), 146-166 (TLST…GLLA), 173-193 (PVFF…LFCI), 224-244 (LFVT…ILTL), 256-276 (VAFI…LLSA), 291-311 (ILIT…YVQT), and 379-399 (AVFL…WNSL).

The protein belongs to the major facilitator superfamily. DHA1 family. MdtG (TC 2.A.1.2.20) subfamily.

The protein resides in the cell inner membrane. Its function is as follows. Confers resistance to fosfomycin and deoxycholate. This chain is Multidrug resistance protein MdtG, found in Escherichia coli O9:H4 (strain HS).